An 88-amino-acid polypeptide reads, in one-letter code: MKTVLIALLRFYKVAVSPMLGNRCRFYPSCSDYAREAIQYHGAARGTYLAVRRVCRCHPFSAGGVDLVPPPNSDTRARGEADARSHRL.

Positions 68 to 88 are disordered; it reads VPPPNSDTRARGEADARSHRL. Basic and acidic residues predominate over residues 75–88; that stretch reads TRARGEADARSHRL.

It belongs to the UPF0161 family.

The protein resides in the cell inner membrane. Could be involved in insertion of integral membrane proteins into the membrane. This chain is Putative membrane protein insertion efficiency factor, found in Burkholderia orbicola (strain MC0-3).